Reading from the N-terminus, the 149-residue chain is Ricin B-like lectin (149 aa).

Residue Ser2 is modified to N-acetylserine. Positions 21, 24, 39, and 47 each coordinate a carbohydrate. The segment at 110–112 (PNL) is involved in dimerization.

In terms of assembly, homodimer. Post-translationally, the N-terminus is blocked.

Functionally, lectin specific for terminal, non-reducing N-acetylgalactosamine (Gal-NAc)-containing carbohydrates including N,N'-diacetyllactosediamine/LDN (GalNAcbeta1-4GlcNAc, LacdiNAc). Specific also for carbohydrates containing N-acetylglucosamine (-GlcNAc) or N-acetyllactosamine (-Galbeta1-4GlcNAc) at the reducing end. Agglutinates human blood group A, AB, B and O erythrocytes with a strong preference for group A. Agglutinates bovine erythrocytes with a very low specificity. Binds carbohydrates bivalently, which is required for its biological activity. Exhibits insecticidal activity against the fruit fly D.melanogaster, mosquito A.aegypti, and amoebozoa A.castellanii. Has anti-nutritional activity against Colorado potato beetle L.decemlineata, and against worm C.elegans. Has antiproliferative activity against human leukemic T-cells. Has an immunostimulatory effect on human antigen-presenting dendritic cells, which are subsequently able to induce efficient T-cell immune responses. This is Ricin B-like lectin from Clitocybe nebularis (Clouded agaric).